The sequence spans 682 residues: Methionine--tRNA ligase (682 aa).

Residues 15–25 carry the 'HIGH' region motif; that stretch reads PYANGAIHLGH. Residues C146, C149, C159, and C162 each coordinate Zn(2+). The 'KMSKS' region motif lies at 331 to 335; that stretch reads KMSKS. An ATP-binding site is contributed by K334. The tRNA-binding domain maps to 580–682; that stretch reads DFAKLDMRVA…SGVTAGMQVK (103 aa).

The protein belongs to the class-I aminoacyl-tRNA synthetase family. MetG type 1 subfamily. As to quaternary structure, homodimer. It depends on Zn(2+) as a cofactor.

The protein resides in the cytoplasm. The enzyme catalyses tRNA(Met) + L-methionine + ATP = L-methionyl-tRNA(Met) + AMP + diphosphate. Its function is as follows. Is required not only for elongation of protein synthesis but also for the initiation of all mRNA translation through initiator tRNA(fMet) aminoacylation. The chain is Methionine--tRNA ligase from Haemophilus influenzae (strain ATCC 51907 / DSM 11121 / KW20 / Rd).